Reading from the N-terminus, the 144-residue chain is MNFKYIVAVSFLIASAYARSVQNDEQSLSQRDVLEEESLREIRGIGGKILSGLKTALKGAAKELASTYLHRKRTAEEHEVMKRLEAVMRDLDSLDYPEEASERETRGFNQDEIANLFTKKEKRILGPVLGLVSNALGGLIKKIG.

The N-terminal stretch at 1–18 (MNFKYIVAVSFLIASAYA) is a signal peptide. Propeptides lie at residues 19–43 (RSVQ…REIR) and 74–123 (TAEE…KEKR). Ile143 carries the post-translational modification Isoleucine amide.

This sequence belongs to the bombinin family. As to expression, expressed by the skin glands.

It is found in the secreted. Functionally, maximin-3 shows antibacterial activity against both Gram-positive and Gram-negative bacteria. It also shows antimicrobial activity against the fungus C.albicans, but not against A.flavus nor P.uticale. It has little hemolytic activity. It possess a significant cytotoxicity against tumor cell lines. It possess a significant anti-HIV activity. It shows high spermicidal activity. Maximin-H9 shows antimicrobial activity against bacteria and against the fungus C.albicans. Shows strong hemolytic activity. The polypeptide is Maximins 3/H9 type 2 (Bombina maxima (Giant fire-bellied toad)).